The primary structure comprises 175 residues: MQLTNRSKVVVDKKMTFMERIYIPSIVSGMMITLSHLFKKKATIQYPEVQREFAFVYRGKHILKRDEQGRENCTACGLCAVSCPAEAITIIADERKKGEEHLYKEEKYASLYEINMLRCIFCGLCEEACPKDAVYLTEELVPAQYNRKDFIYGKDKLVQPLGTSAHPKTYKPYKK.

4Fe-4S ferredoxin-type domains are found at residues 64–93 (KRDE…IIAD) and 110–139 (SLYE…LTEE). Positions 73, 76, 79, 83, 119, 122, 125, and 129 each coordinate [4Fe-4S] cluster.

The protein belongs to the complex I 23 kDa subunit family. As to quaternary structure, NDH-1 is composed of 14 different subunits. Subunits NuoA, H, J, K, L, M, N constitute the membrane sector of the complex. The cofactor is [4Fe-4S] cluster.

It localises to the cell inner membrane. The catalysed reaction is a quinone + NADH + 5 H(+)(in) = a quinol + NAD(+) + 4 H(+)(out). In terms of biological role, NDH-1 shuttles electrons from NADH, via FMN and iron-sulfur (Fe-S) centers, to quinones in the respiratory chain. The immediate electron acceptor for the enzyme in this species is believed to be ubiquinone. Couples the redox reaction to proton translocation (for every two electrons transferred, four hydrogen ions are translocated across the cytoplasmic membrane), and thus conserves the redox energy in a proton gradient. The chain is NADH-quinone oxidoreductase subunit I from Cytophaga hutchinsonii (strain ATCC 33406 / DSM 1761 / CIP 103989 / NBRC 15051 / NCIMB 9469 / D465).